Here is a 251-residue protein sequence, read N- to C-terminus: Zinc import ATP-binding protein ZnuC (251 aa).

One can recognise an ABC transporter domain in the interval 5–220 (VSLENVSVSF…PEFISMFGPR (216 aa)). 37 to 44 (GPNGAGKS) lines the ATP pocket.

This sequence belongs to the ABC transporter superfamily. Zinc importer (TC 3.A.1.15.5) family. The complex is composed of two ATP-binding proteins (ZnuC), two transmembrane proteins (ZnuB) and a solute-binding protein (ZnuA).

It is found in the cell inner membrane. The enzyme catalyses Zn(2+)(out) + ATP(in) + H2O(in) = Zn(2+)(in) + ADP(in) + phosphate(in) + H(+)(in). Part of the ABC transporter complex ZnuABC involved in zinc import. Responsible for energy coupling to the transport system. This Salmonella typhi protein is Zinc import ATP-binding protein ZnuC.